The sequence spans 156 residues: Insulin (156 aa).

The N-terminal stretch at methionine 1–alanine 31 is a signal peptide. 4 disulfides stabilise this stretch: cysteine 37–cysteine 114, cysteine 49–cysteine 119, cysteine 61–cysteine 128, and cysteine 112–cysteine 115. A propeptide spans aspartate 79–asparagine 93 (c peptide beta). A propeptide spans glutamate 96–threonine 102 (c peptide alpha). Residues threonine 141–serine 156 constitute a propeptide, d peptide. Residues serine 144–serine 156 constitute a propeptide, d peptide short form. Residue glutamate 152 is modified to 4-carboxyglutamate.

This sequence belongs to the insulin family. In terms of assembly, heterodimer of a B chain or a B chain' and an A chain probably linked by three disulfide bonds. As to expression, expressed in the central region of the cerebral ganglia mostly within the F and C clusters.

The protein resides in the secreted. Its function is as follows. Involved in glucose metabolism. The chain is Insulin (PIN) from Aplysia californica (California sea hare).